We begin with the raw amino-acid sequence, 90 residues long: Phosphocarrier protein HPr (90 aa).

One can recognise an HPr domain in the interval 1-89 (MPALEITIIN…ELINNRFDEG (89 aa)). His15 acts as the Pros-phosphohistidine intermediate in catalysis.

The protein belongs to the HPr family.

The protein resides in the cytoplasm. In terms of biological role, general (non sugar-specific) component of the phosphoenolpyruvate-dependent sugar phosphotransferase system (sugar PTS). This major carbohydrate active-transport system catalyzes the phosphorylation of incoming sugar substrates concomitantly with their translocation across the cell membrane. The phosphoryl group from phosphoenolpyruvate (PEP) is transferred to the phosphoryl carrier protein HPr by enzyme I. Phospho-HPr then transfers it to the PTS EIIA domain. The polypeptide is Phosphocarrier protein HPr (ptsH) (Pseudomonas aeruginosa (strain ATCC 15692 / DSM 22644 / CIP 104116 / JCM 14847 / LMG 12228 / 1C / PRS 101 / PAO1)).